A 379-amino-acid polypeptide reads, in one-letter code: Pectin lyase A (379 aa).

The first 20 residues, 1–20 (MKYSTIFSAAAAVFAGSAAA), serve as a signal peptide directing secretion. Intrachain disulfides connect Cys83-Cys102 and Cys92-Cys226. The O-linked (Man) threonine glycan is linked to Thr88. A glycan (N-linked (GlcNAc...) asparagine) is linked at Asn129. Arg256 is an active-site residue. A disulfide bridge links Cys322 with Cys330. The O-linked (Man) serine; in strain 4M-147 glycan is linked to Ser368.

The protein belongs to the polysaccharide lyase 1 family. N-glycosylated at Asn-129 and O-glycosylated at Thr-88 when expressed in Aspergillus nidulans. The protein from strain 4M-147 is O-glycosylated at Thr-88 and Ser-368. PubMed:9195887 modeled GalNAc at the O-glycosylation site, a glycosylation not observed in fungi. The O-linked saccharide is probably mannose.

The protein localises to the secreted. The enzyme catalyses Eliminative cleavage of (1-&gt;4)-alpha-D-galacturonan methyl ester to give oligosaccharides with 4-deoxy-6-O-methyl-alpha-D-galact-4-enuronosyl groups at their non-reducing ends.. In terms of biological role, pectinolytic enzymes consist of four classes of enzymes: pectin lyase, polygalacturonase, pectin methylesterase and rhamnogalacturonase. Among pectinolytic enzymes, pectin lyase is the most important in depolymerization of pectin, since it cleaves internal glycosidic bonds of highly methylated pectins. The protein is Pectin lyase A (pelA) of Aspergillus niger.